A 1170-amino-acid chain; its full sequence is Error-prone DNA polymerase (1170 aa).

Disordered stretches follow at residues 867-899 (RGAR…LHND) and 1129-1170 (IPHG…RDFH). The span at 886 to 899 (PRNDNDRQIPLHND) shows a compositional bias: basic and acidic residues.

This sequence belongs to the DNA polymerase type-C family. DnaE2 subfamily.

The protein localises to the cytoplasm. It carries out the reaction DNA(n) + a 2'-deoxyribonucleoside 5'-triphosphate = DNA(n+1) + diphosphate. In terms of biological role, DNA polymerase involved in damage-induced mutagenesis and translesion synthesis (TLS). It is not the major replicative DNA polymerase. The chain is Error-prone DNA polymerase from Bradyrhizobium sp. (strain ORS 278).